The chain runs to 131 residues: Holo-[acyl-carrier-protein] synthase (131 aa).

Residues Asp-8 and Glu-63 each contribute to the Mg(2+) site.

Belongs to the P-Pant transferase superfamily. AcpS family. Requires Mg(2+) as cofactor.

The protein resides in the cytoplasm. The catalysed reaction is apo-[ACP] + CoA = holo-[ACP] + adenosine 3',5'-bisphosphate + H(+). Its function is as follows. Transfers the 4'-phosphopantetheine moiety from coenzyme A to a Ser of acyl-carrier-protein. This Shewanella piezotolerans (strain WP3 / JCM 13877) protein is Holo-[acyl-carrier-protein] synthase.